Here is a 389-residue protein sequence, read N- to C-terminus: Phospho-N-acetylmuramoyl-pentapeptide-transferase (389 aa).

10 helical membrane passes run 25–45 (RAVA…PWVI), 73–93 (TMGG…WADL), 97–117 (FIWI…VDDY), 135–155 (FWQS…VSEA), 189–209 (SMTY…VIVG), 222–242 (GLVI…AYVM), 259–279 (AGEM…FLWF), 286–306 (VFMG…IAVI), 311–331 (IVLF…MLQV), and 366–386 (QVVV…LSTL).

It belongs to the glycosyltransferase 4 family. MraY subfamily. Mg(2+) is required as a cofactor.

The protein resides in the cell inner membrane. The enzyme catalyses UDP-N-acetyl-alpha-D-muramoyl-L-alanyl-gamma-D-glutamyl-meso-2,6-diaminopimeloyl-D-alanyl-D-alanine + di-trans,octa-cis-undecaprenyl phosphate = di-trans,octa-cis-undecaprenyl diphospho-N-acetyl-alpha-D-muramoyl-L-alanyl-D-glutamyl-meso-2,6-diaminopimeloyl-D-alanyl-D-alanine + UMP. It functions in the pathway cell wall biogenesis; peptidoglycan biosynthesis. Catalyzes the initial step of the lipid cycle reactions in the biosynthesis of the cell wall peptidoglycan: transfers peptidoglycan precursor phospho-MurNAc-pentapeptide from UDP-MurNAc-pentapeptide onto the lipid carrier undecaprenyl phosphate, yielding undecaprenyl-pyrophosphoryl-MurNAc-pentapeptide, known as lipid I. This is Phospho-N-acetylmuramoyl-pentapeptide-transferase from Paraburkholderia phymatum (strain DSM 17167 / CIP 108236 / LMG 21445 / STM815) (Burkholderia phymatum).